A 211-amino-acid polypeptide reads, in one-letter code: MRFGVDEAGKGPVLGSMFAAAVRADPAALPGGVGDSKDIRPERRERLAKEIRESADAVGIAEISVERIDADETDMNTLTVEGQAEALSAVARDGLSGTVDAGDTDAARFGRRVADAVDTDVAVTAEHGADETDSLVGAASIIAKVARDTHVAELAAEYGDVGSGYPSDPTTRTFLADYVDRHGELPACARRSWSTCDDVLAAASQSTLSDF.

In terms of domain architecture, RNase H type-2 spans 1–205; that stretch reads MRFGVDEAGK…CDDVLAAASQ (205 aa). A divalent metal cation contacts are provided by Asp6, Glu7, and Asp100.

The protein belongs to the RNase HII family. Mn(2+) serves as cofactor. Mg(2+) is required as a cofactor.

It is found in the cytoplasm. It carries out the reaction Endonucleolytic cleavage to 5'-phosphomonoester.. Its function is as follows. Endonuclease that specifically degrades the RNA of RNA-DNA hybrids. This Haloarcula marismortui (strain ATCC 43049 / DSM 3752 / JCM 8966 / VKM B-1809) (Halobacterium marismortui) protein is Ribonuclease HII.